Here is a 363-residue protein sequence, read N- to C-terminus: Probable methyltransferase-like protein 24 (363 aa).

The N-terminal stretch at 1 to 38 is a signal peptide; the sequence is MGTAKPPGRGCGALPRWLLGAALLLGLRLCMELRHAGS. Residues 37–62 are disordered; that stretch reads GSGPPGRRDLRGPPRTHLLPAPGPLR.

It belongs to the methyltransferase superfamily.

It is found in the secreted. In terms of biological role, probable methyltransferase. This chain is Probable methyltransferase-like protein 24 (Mettl24), found in Rattus norvegicus (Rat).